Here is a 280-residue protein sequence, read N- to C-terminus: MATYLIGDVHGCYDELIALLHKVEFTPGKDTLWLTGDLVARGPGSLDVLRYVKSLGDSVRLVLGNHDLHLLAVFAGISRNKPKDRLTPLLEAPDADELLNWLRRQPLLQIDEEKKLVMAHAGITPQWDLQTAKECARDVEAVLSSDSYPFFLDAMYGDMPNNWSPELRGLGRLRFITNAFTRMRFCFPNGQLDMYSKESPEEAPAPLKPWFAIPGPVAEEYSIAFGHWASLEGKGTPEGIYALDTGCCWGGSLTCLRWEDKQYFVQPSNRHKDLGEAAAS.

It belongs to the Ap4A hydrolase family.

It carries out the reaction P(1),P(4)-bis(5'-adenosyl) tetraphosphate + H2O = 2 ADP + 2 H(+). Functionally, hydrolyzes diadenosine 5',5'''-P1,P4-tetraphosphate to yield ADP. This Shigella flexneri serotype 5b (strain 8401) protein is Bis(5'-nucleosyl)-tetraphosphatase, symmetrical.